The primary structure comprises 493 residues: Glutamyl-tRNA(Gln) amidotransferase subunit A (493 aa).

Catalysis depends on charge relay system residues lysine 78 and serine 158. The active-site Acyl-ester intermediate is serine 182.

The protein belongs to the amidase family. GatA subfamily. As to quaternary structure, heterotrimer of A, B and C subunits.

The catalysed reaction is L-glutamyl-tRNA(Gln) + L-glutamine + ATP + H2O = L-glutaminyl-tRNA(Gln) + L-glutamate + ADP + phosphate + H(+). Functionally, allows the formation of correctly charged Gln-tRNA(Gln) through the transamidation of misacylated Glu-tRNA(Gln) in organisms which lack glutaminyl-tRNA synthetase. The reaction takes place in the presence of glutamine and ATP through an activated gamma-phospho-Glu-tRNA(Gln). This is Glutamyl-tRNA(Gln) amidotransferase subunit A from Methylorubrum populi (strain ATCC BAA-705 / NCIMB 13946 / BJ001) (Methylobacterium populi).